The chain runs to 75 residues: Alpha-amylase inhibitor Paim-2 (75 aa).

Cystine bridges form between cysteine 10–cysteine 26 and cysteine 44–cysteine 72.

In terms of biological role, inhibits mammalian alpha-amylases specifically but has no action on plant and microbial alpha-amylases. This is Alpha-amylase inhibitor Paim-2 from Streptomyces olivaceoviridis (Streptomyces corchorusii).